Reading from the N-terminus, the 527-residue chain is Optineurin (527 aa).

Disordered stretches follow at residues 1 to 32 (MSHQPLSCLTEKEDSPTESTGNGPPYLAHPNL) and 101 to 143 (SHEN…KDQL). A coiled-coil region spans residues 38–170 (EELLQQMKEL…VSELQLKLNS (133 aa)). Residues 58–209 (MKLNNQAMKG…GPTRTVSTSR (152 aa)) are interaction with Rab8. Residues 176–181 (DSFVEI) carry the LIR motif. Ser-177 carries the post-translational modification Phosphoserine; by TBK1. Over residues 186–197 (GEAEGSVKEIKH) the composition is skewed to basic and acidic residues. 2 disordered regions span residues 186–214 (GEAEGSVKEIKHSPGPTRTVSTSRALSKY) and 262–292 (SDFEKKASNRSEIETQTEGSTEKENDEEKGL). Ser-198 is subject to Phosphoserine. The span at 201-210 (PTRTVSTSRA) shows a compositional bias: polar residues. Positions 239–458 (CLREGNQKVE…LLKENDAFED (220 aa)) form a coiled coil. 2 stretches are compositionally biased toward basic and acidic residues: residues 262–274 (SDFEKKASNRSEI) and 281–292 (STEKENDEEKGL). Residues 361-527 (TRKESEKVDR…LQIHVMDCII (167 aa)) form an interaction with HD region. The interaction with MYO6 stretch occupies residues 362–470 (RKESEKVDRA…RQSLMEMQSR (109 aa)). Positions 424–429 (DFHAER) match the UBAN motif. Ser-476 is modified (phosphoserine). The segment at 497–527 (QRNIPIHSCPKCGEVLPDIDTLQIHVMDCII) adopts a CCHC NOA-type zinc-finger fold. Zn(2+)-binding residues include Cys-505, Cys-508, His-521, and Cys-525.

Self-associates. Interacts with HD. Interacts with GTF3A. Interacts with MYO6. Interacts (via UBAN) with ubiquitinated TFRC. Interacts with GTP-bound Rab8 (RAB8A and/or RAB8B). Interacts with TBC1D17. Interacts with TBK1. Interacts with TRAF3. Binds to linear ubiquitin chains. Interacts with LC3 family members MAP1LC3A, MAP1LC3B, GABARAP, GABARAPL1 and GABARAPL2; OPTN phosphorylation increases the association (at least with MAP1LC3B). Interacts with RAB12; the interaction may be indirect. Interacts with TBK1; this interaction leads to the Golgi localization of TBK1 and its subsequent activation. Interacts with palmitoyltransferase ZDHHC17/HIP14; the interaction does not lead to palmitoylation of OPTN. Interacts with CYLD. Interacts with TOM1; the interaction is indirect and is mediated by MYO6, which acts as a bridge between TOM1 and OPTN. Interacts with USP12; the interaction is independent of USP12 deubiquitinase activity and may be involved in regulation of autophagic flux. Phosphorylated by TBK1, leading to restrict bacterial proliferation in case of infection.

It localises to the cytoplasm. The protein localises to the perinuclear region. Its subcellular location is the golgi apparatus. It is found in the trans-Golgi network. The protein resides in the cytoplasmic vesicle. It localises to the autophagosome. The protein localises to the recycling endosome. Plays an important role in the maintenance of the Golgi complex, in membrane trafficking, in exocytosis, through its interaction with myosin VI and Rab8. Links myosin VI to the Golgi complex and plays an important role in Golgi ribbon formation. Negatively regulates the induction of IFNB in response to RNA virus infection. Plays a neuroprotective role in the eye and optic nerve. Probably part of the TNF-alpha signaling pathway that can shift the equilibrium toward induction of cell death. May act by regulating membrane trafficking and cellular morphogenesis via a complex that contains Rab8 and huntingtin (HD). Mediates the interaction of Rab8 with the probable GTPase-activating protein TBC1D17 during Rab8-mediated endocytic trafficking, such as that of transferrin receptor (TFRC/TfR); regulates Rab8 recruitment to tubules emanating from the endocytic recycling compartment. Autophagy receptor that interacts directly with both the cargo to become degraded and an autophagy modifier of the MAP1 LC3 family; targets ubiquitin-coated bacteria (xenophagy) and appears to function in the same pathway as SQSTM1 and CALCOCO2/NDP52. The polypeptide is Optineurin (OPTN) (Pongo abelii (Sumatran orangutan)).